The primary structure comprises 467 residues: tRNA-2-methylthio-N(6)-dimethylallyladenosine synthase (467 aa).

Positions 4–124 constitute an MTTase N-terminal domain; that stretch reads RKLFIKSYGC…LPEMVAKVER (121 aa). C13, C49, C87, C161, C165, and C168 together coordinate [4Fe-4S] cluster. Positions 147 to 379 constitute a Radical SAM core domain; that stretch reads QAHGPSAFLS…QARLVEIQQA (233 aa). The TRAM domain maps to 382 to 444; it reads QACVGRPMDV…SNSLAARLVE (63 aa).

This sequence belongs to the methylthiotransferase family. MiaB subfamily. Monomer. It depends on [4Fe-4S] cluster as a cofactor.

The protein localises to the cytoplasm. The enzyme catalyses N(6)-dimethylallyladenosine(37) in tRNA + (sulfur carrier)-SH + AH2 + 2 S-adenosyl-L-methionine = 2-methylsulfanyl-N(6)-dimethylallyladenosine(37) in tRNA + (sulfur carrier)-H + 5'-deoxyadenosine + L-methionine + A + S-adenosyl-L-homocysteine + 2 H(+). Catalyzes the methylthiolation of N6-(dimethylallyl)adenosine (i(6)A), leading to the formation of 2-methylthio-N6-(dimethylallyl)adenosine (ms(2)i(6)A) at position 37 in tRNAs that read codons beginning with uridine. The protein is tRNA-2-methylthio-N(6)-dimethylallyladenosine synthase of Rhodospirillum rubrum (strain ATCC 11170 / ATH 1.1.1 / DSM 467 / LMG 4362 / NCIMB 8255 / S1).